We begin with the raw amino-acid sequence, 182 residues long: Protein Syd (182 aa).

It belongs to the Syd family.

Its subcellular location is the cell inner membrane. In terms of biological role, interacts with the SecY protein in vivo. May bind preferentially to an uncomplexed state of SecY, thus functioning either as a chelating agent for excess SecY in the cell or as a regulatory factor that negatively controls the translocase function. The sequence is that of Protein Syd from Pectobacterium carotovorum subsp. carotovorum (strain PC1).